The chain runs to 282 residues: 4-diphosphocytidyl-2-C-methyl-D-erythritol kinase (282 aa).

Lys-12 is a catalytic residue. 95-105 (PMGGGIGGGSS) is an ATP binding site. Asp-137 is an active-site residue.

The protein belongs to the GHMP kinase family. IspE subfamily.

It catalyses the reaction 4-CDP-2-C-methyl-D-erythritol + ATP = 4-CDP-2-C-methyl-D-erythritol 2-phosphate + ADP + H(+). Its pathway is isoprenoid biosynthesis; isopentenyl diphosphate biosynthesis via DXP pathway; isopentenyl diphosphate from 1-deoxy-D-xylulose 5-phosphate: step 3/6. In terms of biological role, catalyzes the phosphorylation of the position 2 hydroxy group of 4-diphosphocytidyl-2C-methyl-D-erythritol. This Pseudomonas aeruginosa (strain UCBPP-PA14) protein is 4-diphosphocytidyl-2-C-methyl-D-erythritol kinase.